Consider the following 343-residue polypeptide: GTP 3',8-cyclase (343 aa).

The Radical SAM core domain occupies 19–244; the sequence is PYGRTISYLR…TDVDDSTGGP (226 aa). Arg28 provides a ligand contact to GTP. [4Fe-4S] cluster is bound by residues Cys35 and Cys39. Tyr41 is a binding site for S-adenosyl-L-methionine. Position 42 (Cys42) interacts with [4Fe-4S] cluster. Position 77 (Arg77) interacts with GTP. Gly81 contacts S-adenosyl-L-methionine. Thr111 serves as a coordination point for GTP. Ser135 lines the S-adenosyl-L-methionine pocket. GTP is bound at residue Lys171. Met205 provides a ligand contact to S-adenosyl-L-methionine. [4Fe-4S] cluster-binding residues include Cys268 and Cys271. 273–275 is a binding site for GTP; it reads RVR. Cys285 contributes to the [4Fe-4S] cluster binding site.

It belongs to the radical SAM superfamily. MoaA family. Monomer and homodimer. The cofactor is [4Fe-4S] cluster.

The catalysed reaction is GTP + AH2 + S-adenosyl-L-methionine = (8S)-3',8-cyclo-7,8-dihydroguanosine 5'-triphosphate + 5'-deoxyadenosine + L-methionine + A + H(+). Its pathway is cofactor biosynthesis; molybdopterin biosynthesis. Functionally, catalyzes the cyclization of GTP to (8S)-3',8-cyclo-7,8-dihydroguanosine 5'-triphosphate. The protein is GTP 3',8-cyclase of Nitrobacter hamburgensis (strain DSM 10229 / NCIMB 13809 / X14).